The chain runs to 513 residues: 2-isopropylmalate synthase (513 aa).

Positions 4 to 268 (IKIFDTTLRD…ETGIKTELIY (265 aa)) constitute a Pyruvate carboxyltransferase domain. Residues Asp-13, His-203, His-205, and Asn-239 each contribute to the Mn(2+) site. The regulatory domain stretch occupies residues 392–513 (KLVHFHVHTG…GLLRKNGGAE (122 aa)).

The protein belongs to the alpha-IPM synthase/homocitrate synthase family. LeuA type 1 subfamily. In terms of assembly, homodimer. The cofactor is Mn(2+).

The protein resides in the cytoplasm. It carries out the reaction 3-methyl-2-oxobutanoate + acetyl-CoA + H2O = (2S)-2-isopropylmalate + CoA + H(+). The protein operates within amino-acid biosynthesis; L-leucine biosynthesis; L-leucine from 3-methyl-2-oxobutanoate: step 1/4. Functionally, catalyzes the condensation of the acetyl group of acetyl-CoA with 3-methyl-2-oxobutanoate (2-ketoisovalerate) to form 3-carboxy-3-hydroxy-4-methylpentanoate (2-isopropylmalate). The chain is 2-isopropylmalate synthase from Thermotoga maritima (strain ATCC 43589 / DSM 3109 / JCM 10099 / NBRC 100826 / MSB8).